Consider the following 708-residue polypeptide: Putative adhesion G protein-coupled receptor F2P (708 aa).

The Extracellular portion of the chain corresponds to methionine 1–tyrosine 451. 7 N-linked (GlcNAc...) asparagine glycosylation sites follow: asparagine 21, asparagine 220, asparagine 252, asparagine 260, asparagine 305, asparagine 313, and asparagine 358. The 150-residue stretch at methionine 293–glutamate 442 folds into the GAIN-B domain. 2 disulfide bridges follow: cysteine 394–cysteine 421 and cysteine 409–cysteine 423. A GPS region spans residues cysteine 394–glutamate 442. Residues valine 452–tryptophan 472 traverse the membrane as a helical segment. At serine 473–cysteine 487 the chain is on the cytoplasmic side. A helical membrane pass occupies residues isoleucine 488–leucine 508. Topologically, residues serine 509–leucine 530 are extracellular. Residues serine 531–phenylalanine 551 form a helical membrane-spanning segment. Over histidine 552–serine 557 the chain is Cytoplasmic. A helical membrane pass occupies residues valine 558–threonine 578. The Extracellular portion of the chain corresponds to valine 579–alanine 606. Residues phenylalanine 607–valine 627 traverse the membrane as a helical segment. The Cytoplasmic segment spans residues lysine 628–lysine 650. Residues asparagine 651–isoleucine 671 form a helical membrane-spanning segment. Over aspartate 672–arginine 674 the chain is Extracellular. A helical membrane pass occupies residues serine 675–serine 695. The Cytoplasmic segment spans residues aspartate 696–leucine 708.

The protein belongs to the G-protein coupled receptor 2 family. Adhesion G-protein coupled receptor (ADGR) subfamily. In terms of tissue distribution, high expression in kidney. Up-regulated in lung adenocarcinomas and prostate cancers.

The protein resides in the membrane. Its function is as follows. Orphan receptor. In Homo sapiens (Human), this protein is Putative adhesion G protein-coupled receptor F2P.